A 143-amino-acid polypeptide reads, in one-letter code: Large ribosomal subunit protein uL11 (143 aa).

This sequence belongs to the universal ribosomal protein uL11 family. As to quaternary structure, part of the ribosomal stalk of the 50S ribosomal subunit. Interacts with L10 and the large rRNA to form the base of the stalk. L10 forms an elongated spine to which L12 dimers bind in a sequential fashion forming a multimeric L10(L12)X complex. In terms of processing, one or more lysine residues are methylated.

In terms of biological role, forms part of the ribosomal stalk which helps the ribosome interact with GTP-bound translation factors. This Phenylobacterium zucineum (strain HLK1) protein is Large ribosomal subunit protein uL11.